Here is a 71-residue protein sequence, read N- to C-terminus: Large ribosomal subunit protein uL29 (71 aa).

The disordered stretch occupies residues 32 to 51 (GVNKSTGGAPSNPGKISETK).

The protein belongs to the universal ribosomal protein uL29 family.

The sequence is that of Large ribosomal subunit protein uL29 from Methanococcus maripaludis (strain DSM 14266 / JCM 13030 / NBRC 101832 / S2 / LL).